Reading from the N-terminus, the 257-residue chain is UPF0246 protein Lcho_2652 (257 aa).

Belongs to the UPF0246 family.

The polypeptide is UPF0246 protein Lcho_2652 (Leptothrix cholodnii (strain ATCC 51168 / LMG 8142 / SP-6) (Leptothrix discophora (strain SP-6))).